A 1050-amino-acid polypeptide reads, in one-letter code: Zinc finger and BTB domain-containing protein 11 (1050 aa).

Over residues Leu-143–Leu-156 the composition is skewed to acidic residues. The segment at Leu-143–Lys-173 is disordered. Residues Ser-157–Lys-168 show a composition bias toward low complexity. Positions Cys-214 to Phe-282 constitute a BTB domain. Disordered regions lie at residues Ala-373–Tyr-514 and Leu-543–Glu-563. The span at Glu-378–Glu-399 shows a compositional bias: low complexity. Composition is skewed to basic and acidic residues over residues Ser-478–Arg-501 and Pro-553–Glu-563. C2H2-type zinc fingers lie at residues His-566–His-588 and Tyr-594–His-616. A disordered region spans residues Thr-617 to Lys-641. Over residues Thr-623–Ser-638 the composition is skewed to low complexity. C2H2-type zinc fingers lie at residues Phe-648–His-670, His-676–His-698, Phe-704–His-726, Tyr-732–His-754, Tyr-763–His-785, Phe-791–His-813, Tyr-819–His-843, Arg-855–His-877, Phe-883–His-905, and Tyr-911–His-934.

It localises to the nucleus. The protein localises to the nucleolus. May be involved in transcriptional regulation. The polypeptide is Zinc finger and BTB domain-containing protein 11 (Mus musculus (Mouse)).